Here is an 839-residue protein sequence, read N- to C-terminus: Homeobox-leucine zipper protein HOX10 (839 aa).

Disordered stretches follow at residues Met-1–Asp-24 and Gln-132–Ser-157. The segment at residues Asp-24–Lys-87 is a DNA-binding region (homeobox). Residues Arg-91 to Thr-134 adopt a coiled-coil conformation. In terms of domain architecture, START spans Asp-155 to Val-383.

The protein belongs to the HD-ZIP homeobox family. Class III subfamily. Expressed in stems, leaf sheaths and blades and panicles.

It localises to the nucleus. Functionally, probable transcription factor. This chain is Homeobox-leucine zipper protein HOX10 (HOX10), found in Oryza sativa subsp. indica (Rice).